The sequence spans 270 residues: 3-phenylpropionate-dihydrodiol/cinnamic acid-dihydrodiol dehydrogenase (270 aa).

Position 10 to 34 (10 to 34 (FITGGGSGLGLALVERFIEEGAQVA)) interacts with NAD(+). Residue Ser143 coordinates substrate. The active-site Proton acceptor is Tyr156.

It belongs to the short-chain dehydrogenases/reductases (SDR) family.

The catalysed reaction is 3-(cis-5,6-dihydroxycyclohexa-1,3-dien-1-yl)propanoate + NAD(+) = 3-(2,3-dihydroxyphenyl)propanoate + NADH + H(+). It carries out the reaction (2E)-3-(cis-5,6-dihydroxycyclohexa-1,3-dien-1-yl)prop-2-enoate + NAD(+) = (2E)-3-(2,3-dihydroxyphenyl)prop-2-enoate + NADH + H(+). Its pathway is aromatic compound metabolism; 3-phenylpropanoate degradation. Functionally, converts 3-phenylpropionate-dihydrodiol (PP-dihydrodiol) and cinnamic acid-dihydrodiol (CI-dihydrodiol) into 3-(2,3-dihydroxylphenyl)propanoic acid (DHPP) and 2,3-dihydroxicinnamic acid (DHCI), respectively. The polypeptide is 3-phenylpropionate-dihydrodiol/cinnamic acid-dihydrodiol dehydrogenase (Escherichia coli O17:K52:H18 (strain UMN026 / ExPEC)).